Reading from the N-terminus, the 305-residue chain is Dihydroorotate dehydrogenase B (NAD(+)), catalytic subunit (305 aa).

FMN-binding positions include serine 20 and 44–45 (KG). Substrate contacts are provided by residues lysine 44 and 68–72 (NAIGI). Asparagine 98 and asparagine 126 together coordinate FMN. Asparagine 126 lines the substrate pocket. Residue cysteine 129 is the Nucleophile of the active site. The FMN site is built by lysine 165 and isoleucine 191. Position 192–193 (192–193 (NT)) interacts with substrate. FMN-binding positions include glycine 217, 243–244 (GG), and 265–266 (GT).

The protein belongs to the dihydroorotate dehydrogenase family. Type 1 subfamily. In terms of assembly, heterotetramer of 2 PyrK and 2 PyrD type B subunits. Requires FMN as cofactor.

The protein resides in the cytoplasm. The enzyme catalyses (S)-dihydroorotate + NAD(+) = orotate + NADH + H(+). Its pathway is pyrimidine metabolism; UMP biosynthesis via de novo pathway; orotate from (S)-dihydroorotate (NAD(+) route): step 1/1. Its function is as follows. Catalyzes the conversion of dihydroorotate to orotate with NAD(+) as electron acceptor. This chain is Dihydroorotate dehydrogenase B (NAD(+)), catalytic subunit (pyrD), found in Maridesulfovibrio salexigens (strain ATCC 14822 / DSM 2638 / NCIMB 8403 / VKM B-1763) (Desulfovibrio salexigens).